Reading from the N-terminus, the 537-residue chain is Putative cysteine ligase BshC (537 aa).

This sequence belongs to the BshC family.

Involved in bacillithiol (BSH) biosynthesis. May catalyze the last step of the pathway, the addition of cysteine to glucosamine malate (GlcN-Mal) to generate BSH. This chain is Putative cysteine ligase BshC, found in Staphylococcus saprophyticus subsp. saprophyticus (strain ATCC 15305 / DSM 20229 / NCIMB 8711 / NCTC 7292 / S-41).